The following is a 357-amino-acid chain: MANNFTTPLAASHGNNCDLYAHHSTARILMPLHYSLVFIIGLVGNLLALVVIVQNRKKINSTTLYSMNLVISDILFTTALPTRIVYYALGFDWRIGDALCRITALLFYINTYAGVNFMTCLSIDRFFAVVHPLRYNKIKRIEYAKGICVFVWILVFAQTLPLLLKPMSKQEADKTTCMEYPNFEGTASLPWILLGACLLGYVLPLAIILLCYSQICCKLFRTAKQNPLTEKSGVNKKALNTIILIIGVFVLCFTPYHVAIMQHMVKTLYAPGALGCGVRHSFQISLHFTVCLMNFNCCMDPFIYFFACKGYKRKVMKMLKRQVSVSISSAVRSAPEENSREMTESQMMIHSKASNGR.

The Extracellular portion of the chain corresponds to 1–32; the sequence is MANNFTTPLAASHGNNCDLYAHHSTARILMPL. A glycan (N-linked (GlcNAc...) asparagine) is linked at asparagine 4. A helical membrane pass occupies residues 33–53; the sequence is HYSLVFIIGLVGNLLALVVIV. Over 54-68 the chain is Cytoplasmic; sequence QNRKKINSTTLYSMN. A helical membrane pass occupies residues 69–89; that stretch reads LVISDILFTTALPTRIVYYAL. Arginine 83 lines the 7alpha,25-dihydroxycholesterol pocket. At 90 to 101 the chain is on the extracellular side; that stretch reads GFDWRIGDALCR. A disulfide bridge connects residues cysteine 100 and cysteine 177. A helical transmembrane segment spans residues 102 to 122; the sequence is ITALLFYINTYAGVNFMTCLS. Residues tyrosine 108 and tyrosine 112 each coordinate 7alpha,25-dihydroxycholesterol. Residues 122–130 are interaction with G proteins; sequence SIDRFFAVV. Residues 123–143 lie on the Cytoplasmic side of the membrane; that stretch reads IDRFFAVVHPLRYNKIKRIEY. A helical transmembrane segment spans residues 144–164; sequence AKGICVFVWILVFAQTLPLLL. The Extracellular portion of the chain corresponds to 165–190; sequence KPMSKQEADKTTCMEYPNFEGTASLP. Residues 191 to 211 form a helical membrane-spanning segment; the sequence is WILLGACLLGYVLPLAIILLC. Residues 212-240 lie on the Cytoplasmic side of the membrane; the sequence is YSQICCKLFRTAKQNPLTEKSGVNKKALN. The chain crosses the membrane as a helical span at residues 241-261; sequence TIILIIGVFVLCFTPYHVAIM. Tyrosine 256 provides a ligand contact to 7alpha,25-dihydroxycholesterol. Topologically, residues 262–287 are extracellular; it reads QHMVKTLYAPGALGCGVRHSFQISLH. A helical transmembrane segment spans residues 288–308; the sequence is FTVCLMNFNCCMDPFIYFFAC. The Cytoplasmic portion of the chain corresponds to 309–357; the sequence is KGYKRKVMKMLKRQVSVSISSAVRSAPEENSREMTESQMMIHSKASNGR. Serine 324 and serine 345 each carry phosphoserine. Positions 336 to 357 are disordered; that stretch reads EENSREMTESQMMIHSKASNGR. Positions 344 to 357 are enriched in polar residues; it reads ESQMMIHSKASNGR.

This sequence belongs to the G-protein coupled receptor 1 family. As to quaternary structure, homodimer and heterodimer. Heterodimerizes with CXCR5; leading to modulate the interaction between of CXCL13 and CXCR5.

The protein localises to the cell membrane. Its function is as follows. G-protein coupled receptor expressed in lymphocytes that acts as a chemotactic receptor for B-cells, T-cells, splenic dendritic cells, monocytes/macrophages and astrocytes. Receptor for oxysterol 7-alpha,25-dihydroxycholesterol (7-alpha,25-OHC) and other related oxysterols. Mediates cell positioning and movement of a number of cells by binding the 7-alpha,25-OHC ligand that forms a chemotactic gradient. Binding of 7-alpha,25-OHC mediates the correct localization of B-cells during humoral immune responses. Guides B-cell movement along the B-cell zone-T-cell zone boundary and later to interfollicular and outer follicular regions. Its specific expression during B-cell maturation helps position B-cells appropriately for mounting T-dependent antibody responses. Collaborates with CXCR5 to mediate B-cell migration; probably by forming a heterodimer with CXCR5 that affects the interaction between of CXCL13 and CXCR5. Also acts as a chemotactic receptor for some T-cells upon binding to 7-alpha,25-OHC ligand. Promotes follicular helper T (Tfh) cells differentiation by positioning activated T-cells at the follicle-T-zone interface, promoting contact of newly activated CD4 T-cells with activated dendritic cells and exposing them to Tfh-cell-promoting inducible costimulator (ICOS) ligand. Expression in splenic dendritic cells is required for their homeostasis, localization and ability to induce B- and T-cell responses: GPR183 acts as a chemotactic receptor in dendritic cells that mediates the accumulation of CD4(+) dendritic cells in bridging channels. Regulates migration of astrocytes and is involved in communication between astrocytes and macrophages. Promotes osteoclast precursor migration to bone surfaces. Signals constitutively through G(i)-alpha, but not G(s)-alpha or G(q)-alpha. Signals constitutively also via MAPK1/3 (ERK1/2). This is G-protein coupled receptor 183 (Gpr183) from Rattus norvegicus (Rat).